Reading from the N-terminus, the 300-residue chain is ATP-dependent (S)-NAD(P)H-hydrate dehydratase (300 aa).

The region spanning 14–293 is the YjeF C-terminal domain; sequence LLALFKTVVP…NQIPSVFQTE (280 aa). Residues glycine 114 and 167–173 each bind (6S)-NADPHX; that span reads NVMEFQR. Residues 198–202 and 219–228 each bind ATP; these read KGAND and GSGRRCGGQG. Residue aspartate 229 participates in (6S)-NADPHX binding.

The protein belongs to the NnrD/CARKD family. Requires Mg(2+) as cofactor.

It carries out the reaction (6S)-NADHX + ATP = ADP + phosphate + NADH + H(+). The catalysed reaction is (6S)-NADPHX + ATP = ADP + phosphate + NADPH + H(+). Functionally, catalyzes the dehydration of the S-form of NAD(P)HX at the expense of ATP, which is converted to ADP. Together with NAD(P)HX epimerase, which catalyzes the epimerization of the S- and R-forms, the enzyme allows the repair of both epimers of NAD(P)HX, a damaged form of NAD(P)H that is a result of enzymatic or heat-dependent hydration. This is ATP-dependent (S)-NAD(P)H-hydrate dehydratase from Drosophila melanogaster (Fruit fly).